The chain runs to 198 residues: TM2 domain-containing protein 2 (198 aa).

A signal peptide spans 1–27 (MRWPVPPVGYLLLGGQGLLLTFSLISS). Over 28 to 128 (QNQTSPVTYP…FLRGNKPCIK (101 aa)) the chain is Extracellular. 3 N-linked (GlcNAc...) asparagine glycosylation sites follow: Asn-29, Asn-40, and Asn-76. A helical membrane pass occupies residues 129-149 (YTGHYFITTLLYSFFLGCFGV). A TM2 domain is found at 131–179 (GHYFITTLLYSFFLGCFGVDRFCLGHTGTAVGKLLTLGGLGIWWFVDLI). Residues 150-166 (DRFCLGHTGTAVGKLLT) lie on the Cytoplasmic side of the membrane. A helical transmembrane segment spans residues 167-187 (LGGLGIWWFVDLILLITGGLM). Residues 188–198 (PSDNSNWCTIY) are Extracellular-facing.

The protein belongs to the TM2 family.

Its subcellular location is the membrane. This Xenopus tropicalis (Western clawed frog) protein is TM2 domain-containing protein 2 (tm2d2).